Here is a 217-residue protein sequence, read N- to C-terminus: Tegument protein BKRF4 (217 aa).

The segment at 1 to 217 (MAMFLKSRGV…GNNNYNWPWL (217 aa)) is disordered. Positions 32–42 (YTLGSQASQSI) are enriched in polar residues. The segment covering 43–79 (QEEDVSDTDESDYSDEDEEIDLEEEYPSDEDPSEGSD) has biased composition (acidic residues). The tract at residues 63 to 64 (DL) is interaction with host histones H3/H4. Residues 81–84 (DPSW) are interaction with host H2A/H2B. The segment covering 89–102 (SDESDYSESDEDEA) has biased composition (acidic residues). Positions 106–132 (SQASRSSRVSPSTQQSSGLTPTPSFSR) are enriched in low complexity. Residues 136-145 (RAPPRPPAPA) are compositionally biased toward pro residues. The segment covering 208 to 217 (GNNNYNWPWL) has biased composition (polar residues).

This sequence belongs to the lymphocryptovirus BKRF4 family. Forms a complex with the host H3/H4 dimer and histone chaperone ASF1. Also forms a complex with host H2A/H2B dimer. Interacts (via C-terminus) with BGLF2; this interaction is important for infectious virion production.

The protein resides in the virion tegument. The protein localises to the host nucleus. Its subcellular location is the host cytoplasm. It is found in the host perinuclear region. Its function is as follows. Histone-binding protein that binds to histones H2A/H2B, H3/H4 and cellular chromatin to overcome the host DNA damage response triggered by the viral genome ends. Interferes with histone ubiquitination and recruitment of repair proteins. The sequence is that of Tegument protein BKRF4 from Epstein-Barr virus (strain AG876) (HHV-4).